The sequence spans 557 residues: E3 ubiquitin-protein ligase rnf168 (557 aa).

An RING-type zinc finger spans residues C16–R55. The LR motif 1 signature appears at L112 to E130. The short motif at E145–A153 is the UMI motif element. 2 consecutive short sequence motifs (MIU motif) follow at residues M170–A193 and R422–K445. An LR motif 2 motif is present at residues R449–R460. The disordered stretch occupies residues P482–K543. Polar residues predominate over residues Q490–Y500. Basic residues predominate over residues P508 to Q521.

This sequence belongs to the RNF168 family. Monomer.

The protein localises to the nucleus. The catalysed reaction is S-ubiquitinyl-[E2 ubiquitin-conjugating enzyme]-L-cysteine + [acceptor protein]-L-lysine = [E2 ubiquitin-conjugating enzyme]-L-cysteine + N(6)-ubiquitinyl-[acceptor protein]-L-lysine.. The protein operates within protein modification; protein ubiquitination. In terms of biological role, E3 ubiquitin-protein ligase required for accumulation of repair proteins to sites of DNA damage. Acts with ube2n/ubc13 to amplify the rnf8-dependent histone ubiquitination. Recruited to sites of DNA damage at double-strand breaks (DSBs) by binding to ubiquitinated histone H2A and ubiquitinates histone H2A and H2AX, leading to amplify the rnf8-dependent H2A ubiquitination and promoting the formation of 'Lys-63'-linked ubiquitin conjugates. This leads to concentrate ubiquitinated histones H2A and H2AX at DNA lesions to the threshold required for recruitment of tp53bp1 and brca1. Catalyzes monoubiquitination of 'Lys-13' and 'Lys-15' of nucleosomal histone H2A (H2AK13Ub and H2AK15Ub, respectively). In Xenopus laevis (African clawed frog), this protein is E3 ubiquitin-protein ligase rnf168.